The following is an 89-amino-acid chain: Small ribosomal subunit protein uS15 (89 aa).

Over residues 1–11 (MSIAAERKAEV) the composition is skewed to basic and acidic residues. The interval 1-25 (MSIAAERKAEVIKTSANKPGDTGSP) is disordered.

This sequence belongs to the universal ribosomal protein uS15 family. Part of the 30S ribosomal subunit. Forms a bridge to the 50S subunit in the 70S ribosome, contacting the 23S rRNA.

One of the primary rRNA binding proteins, it binds directly to 16S rRNA where it helps nucleate assembly of the platform of the 30S subunit by binding and bridging several RNA helices of the 16S rRNA. Its function is as follows. Forms an intersubunit bridge (bridge B4) with the 23S rRNA of the 50S subunit in the ribosome. The sequence is that of Small ribosomal subunit protein uS15 from Nitrobacter winogradskyi (strain ATCC 25391 / DSM 10237 / CIP 104748 / NCIMB 11846 / Nb-255).